The chain runs to 396 residues: Elongation factor Tu 1 (396 aa).

Residues 10 to 206 (KPHVNVGTIG…QIDSYIPEPE (197 aa)) enclose the tr-type G domain. Positions 19–26 (GHIDHGKT) are G1. 19 to 26 (GHIDHGKT) lines the GTP pocket. Thr-26 contributes to the Mg(2+) binding site. Residues 60–64 (GITIA) are G2. The segment at 81 to 84 (DCPG) is G3. Residues 81–85 (DCPGH) and 136–139 (NKCD) each bind GTP. Positions 136–139 (NKCD) are G4. Positions 174-176 (SAL) are G5.

This sequence belongs to the TRAFAC class translation factor GTPase superfamily. Classic translation factor GTPase family. EF-Tu/EF-1A subfamily. As to quaternary structure, monomer.

It is found in the cytoplasm. The catalysed reaction is GTP + H2O = GDP + phosphate + H(+). In terms of biological role, GTP hydrolase that promotes the GTP-dependent binding of aminoacyl-tRNA to the A-site of ribosomes during protein biosynthesis. The sequence is that of Elongation factor Tu 1 from Desulfotalea psychrophila (strain LSv54 / DSM 12343).